The primary structure comprises 224 residues: MPISKMPVESMPREKLLSRGPDSLSDAELLAIFLRTGTQGMNVLELSDKLIKDFGSLRHLFSATEAEFCAHKGMGQAKYVQLQAVLEMTQRYLAETLSRGDALTSPSHTKLYLSSILRDRQREAFYILFLDNQNRVIKDEVMFEGTIDAASVYPREVVKRALHHNAAALILAHNHPSGVAEPSQADRRITRRLTDALALVDIRILDHFVVGDGEVISFAERGWI.

Residues 1–21 (MPISKMPVESMPREKLLSRGP) form a disordered region. An MPN domain is found at 102 to 224 (ALTSPSHTKL…VISFAERGWI (123 aa)). The Zn(2+) site is built by histidine 173, histidine 175, and aspartate 186. The short motif at 173 to 186 (HNHPSGVAEPSQAD) is the JAMM motif element.

Belongs to the UPF0758 family.

The polypeptide is UPF0758 protein VS_0182 (Vibrio atlanticus (strain LGP32) (Vibrio splendidus (strain Mel32))).